Consider the following 223-residue polypeptide: Phosphoribosylformylglycinamidine synthase subunit PurQ (223 aa).

Positions 2-223 (KFAVLKFPGS…MVNSWREQNV (222 aa)) constitute a Glutamine amidotransferase type-1 domain. Cysteine 85 acts as the Nucleophile in catalysis. Catalysis depends on residues histidine 193 and glutamate 195.

In terms of assembly, part of the FGAM synthase complex composed of 1 PurL, 1 PurQ and 2 PurS subunits.

It localises to the cytoplasm. The enzyme catalyses N(2)-formyl-N(1)-(5-phospho-beta-D-ribosyl)glycinamide + L-glutamine + ATP + H2O = 2-formamido-N(1)-(5-O-phospho-beta-D-ribosyl)acetamidine + L-glutamate + ADP + phosphate + H(+). It catalyses the reaction L-glutamine + H2O = L-glutamate + NH4(+). It participates in purine metabolism; IMP biosynthesis via de novo pathway; 5-amino-1-(5-phospho-D-ribosyl)imidazole from N(2)-formyl-N(1)-(5-phospho-D-ribosyl)glycinamide: step 1/2. Part of the phosphoribosylformylglycinamidine synthase complex involved in the purines biosynthetic pathway. Catalyzes the ATP-dependent conversion of formylglycinamide ribonucleotide (FGAR) and glutamine to yield formylglycinamidine ribonucleotide (FGAM) and glutamate. The FGAM synthase complex is composed of three subunits. PurQ produces an ammonia molecule by converting glutamine to glutamate. PurL transfers the ammonia molecule to FGAR to form FGAM in an ATP-dependent manner. PurS interacts with PurQ and PurL and is thought to assist in the transfer of the ammonia molecule from PurQ to PurL. This chain is Phosphoribosylformylglycinamidine synthase subunit PurQ, found in Staphylococcus saprophyticus subsp. saprophyticus (strain ATCC 15305 / DSM 20229 / NCIMB 8711 / NCTC 7292 / S-41).